The following is a 396-amino-acid chain: Vitamin K-dependent protein Z (396 aa).

The Gla domain occupies 1-46 (AGSYLLEELFEGHLEKECWEEICVYEEAREVFEDDETTDEFWRTYM). 4-carboxyglutamate is present on residues Glu7, Glu8, Glu11, Glu15, Glu17, Glu20, Glu21, Glu26, Glu27, Glu30, Glu33, Glu36, and Glu40. Cys18 and Cys23 are disulfide-bonded. EGF-like domains are found at residues 47-83 (GGSP…PNCA) and 85-126 (AESE…RSCL). Intrachain disulfides connect Cys51/Cys62, Cys56/Cys71, Cys73/Cys82, Cys89/Cys101, Cys97/Cys110, Cys112/Cys125, and Cys169/Cys185. An O-linked (Glc...) serine glycan is attached at Ser53. The N-linked (GlcNAc...) asparagine glycan is linked to Asn59. Asp64 is subject to (3R)-3-hydroxyaspartate. Positions 135 to 357 (TLGPECCQRP…YALWLRQVTQ (223 aa)) constitute a Peptidase S1 domain. N-linked (GlcNAc...) asparagine glycosylation is found at Asn191 and Asn289. Cys284 and Cys298 are joined by a disulfide. The interval 356–396 (TQQPSRASPRGDRGQGRDGEPVPGDRGGRWAPTALPPGPLV) is disordered. Residues 364 to 375 (PRGDRGQGRDGE) are compositionally biased toward basic and acidic residues. Thr388 is a glycosylation site (O-linked (GalNAc...) threonine).

Belongs to the peptidase S1 family. In terms of processing, the iron and 2-oxoglutarate dependent 3-hydroxylation of aspartate and asparagine is (R) stereospecific within EGF domains. As to expression, plasma.

Its subcellular location is the secreted. In terms of biological role, inhibits activity of the coagulation protease factor Xa in the presence of SERPINA10, calcium and phospholipids. Appears to assist hemostasis by binding thrombin and promoting its association with phospholipid vesicles. This chain is Vitamin K-dependent protein Z (PROZ), found in Bos taurus (Bovine).